The following is a 232-amino-acid chain: Large ribosomal subunit protein uL1 (232 aa).

The protein belongs to the universal ribosomal protein uL1 family. As to quaternary structure, part of the 50S ribosomal subunit.

In terms of biological role, binds directly to 23S rRNA. The L1 stalk is quite mobile in the ribosome, and is involved in E site tRNA release. Protein L1 is also a translational repressor protein, it controls the translation of the L11 operon by binding to its mRNA. The sequence is that of Large ribosomal subunit protein uL1 from Xanthobacter autotrophicus (strain ATCC BAA-1158 / Py2).